Reading from the N-terminus, the 191-residue chain is NF-kappa-B inhibitor-interacting Ras-like protein 2 (191 aa).

Residues 1-191 form a small GTPase-like region; the sequence is MGKSCKVVVC…KNKGSGSLDG (191 aa). 11–18 is a GTP binding site; it reads GQASVGKT. An Effector region motif is present at residues 35–43; sequence MIETQEDIY. GTP is bound by residues 61-65 and 120-123; these read DTRGL and NKCD. The interval 169-191 is disordered; sequence TQPQSKSAFPLSRKNKGSGSLDG.

This sequence belongs to the small GTPase superfamily. Ras family. KappaB-Ras subfamily. Interacts with both NF-kappa-B inhibitor alpha (NFKBIA) and beta (NFKBIB) in vitro. However, it probably only interacts with NFKBIB in vivo. Interacts with GFOD1.

It is found in the cytoplasm. Atypical Ras-like protein that acts as a potent regulator of NF-kappa-B activity by preventing the degradation of NF-kappa-B inhibitor beta (NFKBIB) by most signals, explaining why NFKBIB is more resistant to degradation. May act by blocking phosphorylation of NFKBIB and nuclear localization of p65/RELA NF-kappa-B subunit. It is unclear whether it acts as a GTPase. Both GTP- and GDP-bound forms block phosphorylation of NFKBIB. The sequence is that of NF-kappa-B inhibitor-interacting Ras-like protein 2 (Nkiras2) from Mus musculus (Mouse).